A 27-amino-acid chain; its full sequence is L-amino-acid oxidase (27 aa).

As to quaternary structure, homodimer; non-covalently linked. The cofactor is FAD. In terms of processing, contains 2 disulfide bonds. Post-translationally, N-glycosylated. As to expression, expressed by the venom gland.

It is found in the secreted. It carries out the reaction an L-alpha-amino acid + O2 + H2O = a 2-oxocarboxylate + H2O2 + NH4(+). The enzyme catalyses L-leucine + O2 + H2O = 4-methyl-2-oxopentanoate + H2O2 + NH4(+). Functionally, catalyzes an oxidative deamination of predominantly hydrophobic and aromatic L-amino acids, thus producing hydrogen peroxide that may contribute to the diverse toxic effects of this enzyme. Shows activity on L-Leu. Exhibits diverse biological activities, such as hemolysis, edema, apoptosis, as well as induction of platelet aggregation. Effects of snake L-amino oxidases on platelets are controversial, since they either induce aggregation or inhibit agonist-induced aggregation. These different effects are probably due to different experimental conditions. Unlike other snake venom L-amino acid oxidases, does not induce hemorrhage. This protein may also have antibacterial and antiparasitic activities. The protein is L-amino-acid oxidase of Eristicophis macmahoni (Leaf-nosed viper).